The following is a 35-amino-acid chain: Photosystem II reaction center protein M (35 aa).

Residues Gly7–Ile27 traverse the membrane as a helical segment.

Belongs to the PsbM family. As to quaternary structure, PSII is composed of 1 copy each of membrane proteins PsbA, PsbB, PsbC, PsbD, PsbE, PsbF, PsbH, PsbI, PsbJ, PsbK, PsbL, PsbM, PsbT, PsbX, PsbY, PsbZ, Psb30/Ycf12, peripheral proteins PsbO, CyanoQ (PsbQ), PsbU, PsbV and a large number of cofactors. It forms dimeric complexes.

The protein localises to the cellular thylakoid membrane. One of the components of the core complex of photosystem II (PSII). PSII is a light-driven water:plastoquinone oxidoreductase that uses light energy to abstract electrons from H(2)O, generating O(2) and a proton gradient subsequently used for ATP formation. It consists of a core antenna complex that captures photons, and an electron transfer chain that converts photonic excitation into a charge separation. This subunit is found at the monomer-monomer interface. This chain is Photosystem II reaction center protein M, found in Synechococcus elongatus (strain ATCC 33912 / PCC 7942 / FACHB-805) (Anacystis nidulans R2).